Consider the following 120-residue polypeptide: uncharacterized protein (120 aa).

The RING-type zinc finger occupies 70–109; sequence CARCRRSLTLTPAVSCLPCGHSCLCTDCDQLFANVCFECK.

This is an uncharacterized protein from Orgyia pseudotsugata multicapsid polyhedrosis virus (OpMNPV).